The sequence spans 1384 residues: ABC transporter C family member 2 (1384 aa).

Residues 104-388 (NKISVATKIF…LPEAIHRALS (285 aa)) form the ABC transmembrane type-1 1 domain. Transmembrane regions (helical) follow at residues 112–132 (IFVA…IYYI), 140–160 (TFKF…SLTL), 226–246 (IFVF…IVGL), 247–267 (SGLV…FLST), and 333–353 (MITQ…YALT). In terms of domain architecture, ABC transporter 1 spans 505–724 (IEYDGAVQPS…GIDFESIMKT (220 aa)). 537–544 (GIVGSGKT) lines the ATP pocket. Residues 729–756 (IDENDQSSTSTTDKKSSTSSSSSELKKS) form a disordered region. Residues 735–756 (SSTSTTDKKSSTSSSSSELKKS) show a composition bias toward low complexity. 5 helical membrane passes run 813 to 833 (LFFL…LSDF), 852 to 872 (ILYY…RYFM), 941 to 961 (LFMM…LVVV), 1036 to 1056 (GIRL…SSLF), and 1061 to 1081 (GFSV…NWTI). An ABC transmembrane type-1 2 domain is found at 814–1093 (FFLTCALYFI…MTELEVKMNS (280 aa)). The ABC transporter 2 domain occupies 1137–1371 (VEFKNVEIKY…EGSRFKKLVK (235 aa)). An ATP-binding site is contributed by 1171–1178 (GRTGAGKS).

Belongs to the ABC transporter superfamily. ABCC family. Conjugate transporter (TC 3.A.1.208) subfamily.

It localises to the membrane. This is ABC transporter C family member 2 (abcC2) from Dictyostelium discoideum (Social amoeba).